Here is a 141-residue protein sequence, read N- to C-terminus: Large ribosomal subunit protein uL11 (141 aa).

The protein belongs to the universal ribosomal protein uL11 family. Part of the ribosomal stalk of the 50S ribosomal subunit. Interacts with L10 and the large rRNA to form the base of the stalk. L10 forms an elongated spine to which L12 dimers bind in a sequential fashion forming a multimeric L10(L12)X complex. One or more lysine residues are methylated.

In terms of biological role, forms part of the ribosomal stalk which helps the ribosome interact with GTP-bound translation factors. This is Large ribosomal subunit protein uL11 from Fervidobacterium nodosum (strain ATCC 35602 / DSM 5306 / Rt17-B1).